Here is a 206-residue protein sequence, read N- to C-terminus: Ion-translocating oxidoreductase complex subunit G (206 aa).

The chain crosses the membrane as a helical span at residues G9 to M29. At T174 the chain carries FMN phosphoryl threonine.

It belongs to the RnfG family. In terms of assembly, the complex is composed of six subunits: RsxA, RsxB, RsxC, RsxD, RsxE and RsxG. FMN serves as cofactor.

The protein resides in the cell inner membrane. Functionally, part of a membrane-bound complex that couples electron transfer with translocation of ions across the membrane. Required to maintain the reduced state of SoxR. Probably transfers electron from NAD(P)H to SoxR. This Escherichia coli (strain K12) protein is Ion-translocating oxidoreductase complex subunit G.